The sequence spans 124 residues: Flowering-promoting factor 1-like protein 1 (124 aa).

A disordered region spans residues 19 to 42; it reads PYNQSAGDSSESSSSGGNQQQRMR. Over residues 22–39 the composition is skewed to low complexity; the sequence is QSAGDSSESSSSGGNQQQ.

The protein belongs to the FPF1 family. Expressed in roots, flowers, and at a low level, in leaves.

Functionally, modulates the competence to flowering of apical meristems. This chain is Flowering-promoting factor 1-like protein 1 (FLP1), found in Arabidopsis thaliana (Mouse-ear cress).